The following is a 40-amino-acid chain: Alpha-conotoxin-like Qc1.1c (40 aa).

Positions 1-19 (SDGRNTAANDKASNLMALR) are excised as a propeptide. Cystine bridges form between Cys-22–Cys-28 and Cys-23–Cys-36. The interval 24–26 (PNP) is lacks the Ser-Xaa-Pro motif that is crucial for potent interaction with nAChR.

This sequence belongs to the conotoxin A superfamily. In terms of tissue distribution, expressed by the venom duct.

Its subcellular location is the secreted. Alpha-conotoxins act on postsynaptic membranes, they bind to the nicotinic acetylcholine receptors (nAChR) and thus inhibit them. Has possibly a distinct nAChR binding mode from other alpha-conotoxins, due to a different three residue motif (lacks the Ser-Xaa-Pro motif). The protein is Alpha-conotoxin-like Qc1.1c of Conus quercinus (Oak cone).